We begin with the raw amino-acid sequence, 372 residues long: Cyclin-A3-2 (372 aa).

Residues 53-73 are disordered; sequence NQKKETQKPKRNLKPPPAKQI.

This sequence belongs to the cyclin family. Cyclin AB subfamily.

The chain is Cyclin-A3-2 (CYCA3-2) from Arabidopsis thaliana (Mouse-ear cress).